Consider the following 141-residue polypeptide: Hemoglobin subunit alpha (141 aa).

The Globin domain occupies 1 to 141 (VLSAADKSNV…VSTVLTSKYR (141 aa)). Phosphoserine is present on Ser3. N6-succinyllysine occurs at positions 7 and 11. Lys16 is modified (N6-acetyllysine; alternate). Lys16 is subject to N6-succinyllysine; alternate. Phosphotyrosine is present on Tyr24. Residue Ser35 is modified to Phosphoserine. Lys40 is subject to N6-succinyllysine. At Ser49 the chain carries Phosphoserine. Position 58 (His58) interacts with O2. His87 contributes to the heme b binding site. Ser102 carries the phosphoserine modification. Thr108 is modified (phosphothreonine). At Ser124 the chain carries Phosphoserine. Residues Thr134 and Thr137 each carry the phosphothreonine modification. Phosphoserine is present on Ser138.

It belongs to the globin family. Heterotetramer of two alpha chains and two beta chains. In terms of tissue distribution, red blood cells.

Involved in oxygen transport from the lung to the various peripheral tissues. Its function is as follows. Hemopressin acts as an antagonist peptide of the cannabinoid receptor CNR1. Hemopressin-binding efficiently blocks cannabinoid receptor CNR1 and subsequent signaling. The protein is Hemoglobin subunit alpha (HBA) of Felis catus (Cat).